The primary structure comprises 162 residues: Disulfide bond formation protein B (162 aa).

The Cytoplasmic segment spans residues 1–10 (MGDWLLRRRG). Residues 11–27 (LALLLVLTLLLNLGALG) form a helical membrane-spanning segment. The Periplasmic segment spans residues 28-45 (LEYLADMPPCPLCWVQRG). A disulfide bridge links C37 with C40. The chain crosses the membrane as a helical span at residues 46-62 (VFGLMSLVALVGLVYFP). The Cytoplasmic segment spans residues 63–68 (RGWGRW). The chain crosses the membrane as a helical span at residues 69 to 86 (PLAGALGLSALTGVIIAL). The Periplasmic portion of the chain corresponds to 87–140 (RHLYIQANPDAVSCGMSPEVLAQFLPWWEVLLEILSGTTDCTQVDAVLGVPLPG). A disulfide bridge links C100 with C127. The helical transmembrane segment at 141–159 (WTLVGYLALGALGLYAVLA) threads the bilayer. The Cytoplasmic segment spans residues 160–162 (RRA).

This sequence belongs to the DsbB family.

The protein localises to the cell inner membrane. Required for disulfide bond formation in some periplasmic proteins. Acts by oxidizing the DsbA protein. The chain is Disulfide bond formation protein B from Alkalilimnicola ehrlichii (strain ATCC BAA-1101 / DSM 17681 / MLHE-1).